A 566-amino-acid polypeptide reads, in one-letter code: Membrane protein insertase YidC (566 aa).

A helical transmembrane segment spans residues 7–27 (ILIVALAIVSYVMVLKWNQDY). Positions 38–72 (ASSTTAPGLPDAPTGTSAANDDIPRAASDTTAPAE) are disordered. A run of 5 helical transmembrane segments spans residues 347–367 (LELT…FWLL), 373–393 (LVGN…GIFF), 443–463 (LGGC…YWVL), 474–494 (FMLW…PIIM), and 521–541 (PIIF…YWVV).

The protein belongs to the OXA1/ALB3/YidC family. Type 1 subfamily. In terms of assembly, interacts with the Sec translocase complex via SecD. Specifically interacts with transmembrane segments of nascent integral membrane proteins during membrane integration.

Its subcellular location is the cell inner membrane. Required for the insertion and/or proper folding and/or complex formation of integral membrane proteins into the membrane. Involved in integration of membrane proteins that insert both dependently and independently of the Sec translocase complex, as well as at least some lipoproteins. Aids folding of multispanning membrane proteins. The sequence is that of Membrane protein insertase YidC from Pseudomonas fluorescens (strain ATCC BAA-477 / NRRL B-23932 / Pf-5).